A 913-amino-acid chain; its full sequence is MANASKTQIIDYEGHIIDDLKEWMSDNGLSKLGFNYNVIAILGSQSSGKSTLLNNLFKTSFEVMNTKLGHSQTTQGLWLSYDKFEDELAGGSSEGTDAESKNKSGDKPVVNPTLILDVEGNDSKERGENRLTFEHRSALFSLALADCVIVNLWYHSLGNFTASNYGLLKTVMEVHLELFHQNVNCPKTILMFTVRDWFEEFAPLDVIREKIIEEYVNKIWQELKKPKSSKNAKVDDYFIIEVVGLSHGIIKKDEFLKDIKRLRHRWVYELRPVNYSRNIPADGFAQYCHNIWNTIVKQSQLDIPSQQEMLATFRCQEIKNNVLNSISGMIKEKIIDSKNRYIENFKTWAETDIIEKSVNEYLIDASRYQRSICLKTLEELLEAIFIQLQTIVDNNLNYTQRILSSKFSKELNSMYSVCTTDKGYFLLSSDKNADATEQDDNLSNMDKSGESAKKGNQSKCINLWSNFLYNADMLEYTTISNFYDQYKKCTIEIVEGSMASNESKDSQEKKNHDFNYKNSLTILATSIYKDTNRIRSVQCNILIERIRATIKEELKNVDNMLVTVKCSKDYWDYILKVTNKLEDYIYTNLSKCFVNLKIGINTTHLNNGDNIYARLNTNSDYGFVYSHNDHMYDFSDDENNNFDEIDTEIDQSKNDMESLFNSKKFEIITKQNKKEKYVSSINNDLTKEMNNKKLILELKNFYIEIIIDALKIKLDEISNDIANVIINRFESVFNYDEIEQPRQWRNVSVVELKNIFRVSKDYAFLIVEILQKNIKIDKLDKHLPNNFINTDIIEKGKSKAKKRIQEICRDAQYIQETGGQMSLKNVPFAFWVILLILGWNEILMFTRLFFRLNIILPMFMAFIIIVGSCLYTGNAQVLSYLNKIAFIVIKHSYNFYKHLQTVGNQPTKPEKVD.

Topologically, residues 1–825 are cytoplasmic; the sequence is MANASKTQII…ETGGQMSLKN (825 aa). A GB1/RHD3-type G domain is found at 33-288; it reads GFNYNVIAIL…IPADGFAQYC (256 aa). 43 to 50 contacts GTP; the sequence is GSQSSGKS. Disordered stretches follow at residues 89-108 and 436-455; these read AGGS…GDKP and TEQD…AKKG. 2 coiled-coil regions span residues 636–659 and 703–727; these read DDEN…MESL and IEII…VIIN. The chain crosses the membrane as a helical span at residues 826–846; that stretch reads VPFAFWVILLILGWNEILMFT. The Lumenal portion of the chain corresponds to 847-849; sequence RLF. A helical transmembrane segment spans residues 850–870; sequence FRLNIILPMFMAFIIIVGSCL. Topologically, residues 871–913 are cytoplasmic; it reads YTGNAQVLSYLNKIAFIVIKHSYNFYKHLQTVGNQPTKPEKVD.

The protein belongs to the TRAFAC class dynamin-like GTPase superfamily. GB1/RHD3 GTPase family. RHD3 subfamily.

It is found in the endoplasmic reticulum membrane. In terms of biological role, probable GTP-binding protein involved in generating and maintaining the structure of the tubular endoplasmic reticulum network. The sequence is that of Protein SEY1 homolog from Plasmodium chabaudi chabaudi.